The primary structure comprises 93 residues: Small ribosomal subunit protein uS19c (93 aa).

The segment at Glu-73 to Pro-93 is disordered. Positions Phe-80–Pro-93 are enriched in basic residues.

It belongs to the universal ribosomal protein uS19 family.

The protein localises to the plastid. Its subcellular location is the chloroplast. Functionally, protein S19 forms a complex with S13 that binds strongly to the 16S ribosomal RNA. The sequence is that of Small ribosomal subunit protein uS19c (rps19) from Mesostigma viride (Green alga).